A 352-amino-acid polypeptide reads, in one-letter code: Nicotinate-nucleotide--dimethylbenzimidazole phosphoribosyltransferase (352 aa).

Glu316 acts as the Proton acceptor in catalysis.

Belongs to the CobT family.

The catalysed reaction is 5,6-dimethylbenzimidazole + nicotinate beta-D-ribonucleotide = alpha-ribazole 5'-phosphate + nicotinate + H(+). It functions in the pathway nucleoside biosynthesis; alpha-ribazole biosynthesis; alpha-ribazole from 5,6-dimethylbenzimidazole: step 1/2. Catalyzes the synthesis of alpha-ribazole-5'-phosphate from nicotinate mononucleotide (NAMN) and 5,6-dimethylbenzimidazole (DMB). In Clostridium acetobutylicum (strain ATCC 824 / DSM 792 / JCM 1419 / IAM 19013 / LMG 5710 / NBRC 13948 / NRRL B-527 / VKM B-1787 / 2291 / W), this protein is Nicotinate-nucleotide--dimethylbenzimidazole phosphoribosyltransferase.